Reading from the N-terminus, the 465-residue chain is UDP-N-acetylmuramate--L-alanine ligase (465 aa).

Gly-115 to Thr-121 is a binding site for ATP.

The protein belongs to the MurCDEF family.

It localises to the cytoplasm. It carries out the reaction UDP-N-acetyl-alpha-D-muramate + L-alanine + ATP = UDP-N-acetyl-alpha-D-muramoyl-L-alanine + ADP + phosphate + H(+). It functions in the pathway cell wall biogenesis; peptidoglycan biosynthesis. Functionally, cell wall formation. The chain is UDP-N-acetylmuramate--L-alanine ligase from Coxiella burnetii (strain Dugway 5J108-111).